Consider the following 168-residue polypeptide: Chemoreceptor glutamine deamidase CheD (168 aa).

It belongs to the CheD family. Forms a complex with CheC.

It catalyses the reaction L-glutaminyl-[protein] + H2O = L-glutamyl-[protein] + NH4(+). Its function is as follows. Deamidates glutamine residues to glutamate on methyl-accepting chemotaxis receptors (MCPs). CheD-mediated MCP deamidation is required for productive communication of the conformational signals of the chemoreceptors to the CheA kinase. The sequence is that of Chemoreceptor glutamine deamidase CheD from Bacillus licheniformis (strain ATCC 14580 / DSM 13 / JCM 2505 / CCUG 7422 / NBRC 12200 / NCIMB 9375 / NCTC 10341 / NRRL NRS-1264 / Gibson 46).